Here is a 142-residue protein sequence, read N- to C-terminus: Nucleoside diphosphate kinase (142 aa).

ATP is bound by residues Lys-9, Phe-57, Arg-85, Thr-91, Arg-102, and Asn-112. His-115 serves as the catalytic Pros-phosphohistidine intermediate.

It belongs to the NDK family. Homotetramer. Requires Mg(2+) as cofactor.

The protein resides in the cytoplasm. The enzyme catalyses a 2'-deoxyribonucleoside 5'-diphosphate + ATP = a 2'-deoxyribonucleoside 5'-triphosphate + ADP. It carries out the reaction a ribonucleoside 5'-diphosphate + ATP = a ribonucleoside 5'-triphosphate + ADP. Major role in the synthesis of nucleoside triphosphates other than ATP. The ATP gamma phosphate is transferred to the NDP beta phosphate via a ping-pong mechanism, using a phosphorylated active-site intermediate. In Dehalococcoides mccartyi (strain ATCC BAA-2100 / JCM 16839 / KCTC 5957 / BAV1), this protein is Nucleoside diphosphate kinase.